Reading from the N-terminus, the 505-residue chain is Cytochrome P450 71A2 (505 aa).

A helical transmembrane segment spans residues 7 to 27 (WYSLLIPLFVFIFLLIHHCFF). Cys-448 serves as a coordination point for heme.

Belongs to the cytochrome P450 family. The cofactor is heme.

It localises to the membrane. In terms of biological role, may have a role in maturation, such as during flavor formation or other metabolite production specific to aging tissues. This is Cytochrome P450 71A2 (CYP71A2) from Solanum melongena (Eggplant).